Consider the following 185-residue polypeptide: Elongation factor P (185 aa).

This sequence belongs to the elongation factor P family.

Its subcellular location is the cytoplasm. The protein operates within protein biosynthesis; polypeptide chain elongation. In terms of biological role, involved in peptide bond synthesis. Stimulates efficient translation and peptide-bond synthesis on native or reconstituted 70S ribosomes in vitro. Probably functions indirectly by altering the affinity of the ribosome for aminoacyl-tRNA, thus increasing their reactivity as acceptors for peptidyl transferase. The sequence is that of Elongation factor P from Picosynechococcus sp. (strain ATCC 27264 / PCC 7002 / PR-6) (Agmenellum quadruplicatum).